Here is a 201-residue protein sequence, read N- to C-terminus: MARSFAQLARTAEKTKGSVAVPKEPLDHPPLQIHTLGNGVLRQSTRRIGKVDESVRDLVRDMLRSMYAAKGIGLAAPQVGIHKQLLVLDLDLETPTTPPVVLINPEIISSSATVETYEEGCLSIPGVYLNVVRPSEIVLSFRDEMGRPRKMKADGLMARCIQHEMDHLEGVLFVDRVTDENELSLELKEHGFKRADVRPLV.

Cys121 and His163 together coordinate Fe cation. Glu164 is an active-site residue. His167 is a Fe cation binding site.

This sequence belongs to the polypeptide deformylase family. The cofactor is Fe(2+).

It catalyses the reaction N-terminal N-formyl-L-methionyl-[peptide] + H2O = N-terminal L-methionyl-[peptide] + formate. In terms of biological role, removes the formyl group from the N-terminal Met of newly synthesized proteins. Requires at least a dipeptide for an efficient rate of reaction. N-terminal L-methionine is a prerequisite for activity but the enzyme has broad specificity at other positions. The sequence is that of Peptide deformylase 2 from Prochlorococcus marinus (strain MIT 9313).